We begin with the raw amino-acid sequence, 241 residues long: Homeobox protein TGIF2LX (241 aa).

Disordered regions lie at residues 1–58 (MEAA…GNLP) and 125–207 (KTGK…ELVS). Residues 10–39 (ETQSPVQKDSPAKTQSPAQDTSIMSRNNAD) are compositionally biased toward polar residues. The segment at residues 48–111 (EHKKKRKGNL…INARRRILPD (64 aa)) is a DNA-binding region (homeobox; TALE-type).

Belongs to the TALE/TGIF homeobox family.

The protein localises to the nucleus. May have a transcription role in testis. The polypeptide is Homeobox protein TGIF2LX (TGIF2LX) (Pan troglodytes (Chimpanzee)).